A 463-amino-acid chain; its full sequence is Serine/threonine-protein kinase sgk-1 (463 aa).

The 258-residue stretch at 135–392 folds into the Protein kinase domain; that stretch reads FDYLTTIGKG…FRDIRDHPFF (258 aa). ATP is bound by residues 141–149 and K164; that span reads IGKGSFGRV. D259 serves as the catalytic Proton acceptor. An AGC-kinase C-terminal domain is found at 393-463; it reads LPVDWDKLLN…TFVDTNRVLV (71 aa).

It belongs to the protein kinase superfamily. AGC Ser/Thr protein kinase family. Interacts with pdk-1, akt-1, akt-2 and daf-16. Part of a complex containing sgk-1, akt-1 and akt-2. Interacts with let-92 phosphatase regulatory subunit pptr-1. Mg(2+) serves as cofactor. Expressed in late embryos just before hatching. At postembryonic stages, expressed in sensory and motor neurons and in the intestine. Highly expressed in the intestine and head and tail neurons.

The protein localises to the cytoplasm. It localises to the nucleus. The protein resides in the apical cell membrane. It carries out the reaction L-seryl-[protein] + ATP = O-phospho-L-seryl-[protein] + ADP + H(+). It catalyses the reaction L-threonyl-[protein] + ATP = O-phospho-L-threonyl-[protein] + ADP + H(+). Phosphorylated and activated by pdk-1. Acts downstream of PI3 kinase age-1 and kinase pdk-1 in the daf-2/insulin receptor-like transduction pathway. Essential role in regulating development, stress response, and longevity. Phosphorylates Forkhead-related daf-16 and the longevity-promoting skn-1 transcription factors, which inhibits their entry into the nucleus and antagonizes their function. Promotes the cytoplasmic localization of the transcription factor pqm-1. Plays a role in the intracellular trafficking of proteins such as mig-14 to the cell membrane, and this may be through positively regulating ceramide synthesis. Acts downstream of rict-1 to regulate fat storage, size, development and vitellogenesis. Downstream of age-1 and together with akt-1/2, promotes cell survival during embryonic development. Plays a role in maintaining the gonadal basement membrane through antagonizing akt-1 activity. Does not appear to play a role in immune function. The polypeptide is Serine/threonine-protein kinase sgk-1 (Caenorhabditis elegans).